The chain runs to 646 residues: A-kinase anchor protein 8-like (646 aa).

Residues 1-268 (MSYTGFVQGS…MRRTWKTWTT (268 aa)) are sufficient for activation of CTE-mediated expression. Arginine 208 carries the asymmetric dimethylarginine; alternate modification. Arginine 208 carries the post-translational modification Omega-N-methylarginine; alternate. 3 positions are modified to omega-N-methylarginine: arginine 217, arginine 237, and arginine 247. The residue at position 257 (lysine 257) is an N6-acetyllysine. A disordered region spans residues 264-381 (KTWTTADFRT…QDKQKKRQRD (118 aa)). Position 267 is a phosphothreonine (threonine 267). The Nuclear localization signal signature appears at 274–279 (KKKKRK). The Nuclear export signal (NES) signature appears at 280–296 (QGGSPDEPDSKATRTDC). Residue serine 283 is modified to Phosphoserine. Over residues 287-296 (PDSKATRTDC) the composition is skewed to basic and acidic residues. Position 292 is a phosphothreonine (threonine 292). Serine 297 carries the phosphoserine modification. Over residues 298–314 (DNSDSDNDEGTEGEATE) the composition is skewed to acidic residues. A compositionally biased stretch (basic and acidic residues) spans 337–349 (EDGREEGKEDPEK). The short motif at 362-364 (KRK) is the Nuclear localization signal element. C2H2 AKAP95-type zinc fingers lie at residues 391–413 (CSLC…SKFH) and 484–507 (CAAC…TMDH). The interval 545–646 (GENPFTDSPE…DDEEGGGGAP (102 aa)) is disordered. Phosphoserine is present on serine 552. Over residues 552-563 (SPEEEKEQEEAE) the composition is skewed to acidic residues. Residues 564–586 (GGALDEGAQGEAAGISEGAEGVP) are compositionally biased toward low complexity. Over residues 587 to 607 (AQPPVPPEPAPGAVSPPPPPP) the composition is skewed to pro residues. Over residues 634–646 (DVEDDEEGGGGAP) the composition is skewed to acidic residues.

Belongs to the AKAP95 family. Interacts (via N-terminus) with DHX9 (via RGG region). Interacts with TMPO isoform Beta, PRPF40A, RNF43, lamin-B. Interacts with HDAC3; increased during mitosis. Interacts with EBV EBNA-LP. Interacts with HIV-1 reverse transcriptase/ribonuclease H. Phosphorylated on serine or threonine residues possibly by PKA; probably modulating the interaction with TMPO isoform Beta. Ubiquitously expressed. Expressed in the brain cortex (at protein level).

The protein localises to the nucleus. It is found in the nucleus matrix. It localises to the nucleus speckle. Its subcellular location is the PML body. The protein resides in the cytoplasm. Functionally, could play a role in constitutive transport element (CTE)-mediated gene expression by association with DHX9. Increases CTE-dependent nuclear unspliced mRNA export. Proposed to target PRKACA to the nucleus but does not seem to be implicated in the binding of regulatory subunit II of PKA. May be involved in nuclear envelope breakdown and chromatin condensation. May be involved in anchoring nuclear membranes to chromatin in interphase and in releasing membranes from chromating at mitosis. May regulate the initiation phase of DNA replication when associated with TMPO isoform Beta. Required for cell cycle G2/M transition and histone deacetylation during mitosis. In mitotic cells recruits HDAC3 to the vicinity of chromatin leading to deacetylation and subsequent phosphorylation at 'Ser-10' of histone H3; in this function seems to act redundantly with AKAP8. May be involved in regulation of pre-mRNA splicing. (Microbial infection) In case of EBV infection, may target PRKACA to EBNA-LP-containing nuclear sites to modulate transcription from specific promoters. In terms of biological role, (Microbial infection) Can synergize with DHX9 to activate the CTE-mediated gene expression of type D retroviruses. Its function is as follows. (Microbial infection) In case of HIV-1 infection, involved in the DHX9-promoted annealing of host tRNA(Lys3) to viral genomic RNA as a primer in reverse transcription; in vitro negatively regulates DHX9 annealing activity. The polypeptide is A-kinase anchor protein 8-like (AKAP8L) (Homo sapiens (Human)).